We begin with the raw amino-acid sequence, 156 residues long: Cyclic pyranopterin monophosphate synthase (156 aa).

Residues 75–77 and 111–112 contribute to the substrate site; these read LCH and ME. D126 is a catalytic residue.

The protein belongs to the MoaC family. In terms of assembly, homohexamer; trimer of dimers.

It carries out the reaction (8S)-3',8-cyclo-7,8-dihydroguanosine 5'-triphosphate = cyclic pyranopterin phosphate + diphosphate. It participates in cofactor biosynthesis; molybdopterin biosynthesis. In terms of biological role, catalyzes the conversion of (8S)-3',8-cyclo-7,8-dihydroguanosine 5'-triphosphate to cyclic pyranopterin monophosphate (cPMP). The sequence is that of Cyclic pyranopterin monophosphate synthase from Erythrobacter litoralis (strain HTCC2594).